A 211-amino-acid chain; its full sequence is ATP-dependent dethiobiotin synthetase BioD 2 (211 aa).

13–18 contacts ATP; sequence DIGKTI. Thr-17 serves as a coordination point for Mg(2+). Lys-38 is an active-site residue. Thr-42 is a binding site for substrate. ATP contacts are provided by residues Asp-50, 115–118, and 175–176; these read EGAG and NT. Positions 50 and 115 each coordinate Mg(2+).

It belongs to the dethiobiotin synthetase family. As to quaternary structure, homodimer. The cofactor is Mg(2+).

The protein resides in the cytoplasm. The catalysed reaction is (7R,8S)-7,8-diammoniononanoate + CO2 + ATP = (4R,5S)-dethiobiotin + ADP + phosphate + 3 H(+). The protein operates within cofactor biosynthesis; biotin biosynthesis; biotin from 7,8-diaminononanoate: step 1/2. Its function is as follows. Catalyzes a mechanistically unusual reaction, the ATP-dependent insertion of CO2 between the N7 and N8 nitrogen atoms of 7,8-diaminopelargonic acid (DAPA, also called 7,8-diammoniononanoate) to form a ureido ring. The polypeptide is ATP-dependent dethiobiotin synthetase BioD 2 (Haemophilus ducreyi (strain 35000HP / ATCC 700724)).